The primary structure comprises 1899 residues: Protocadherin-15 (1899 aa).

Positions 1–26 (MLQQFCLWKWLAVGIAVATILASSLA) are cleaved as a signal peptide. Residues 27–1376 (QNDEDCKLAR…AQAVGYTEGA (1350 aa)) are Extracellular-facing. C32 and C120 form a disulfide bridge. Cadherin domains lie at 38–147 (GPPA…SPQF), 148–265 (QQQR…GPMF), 278–395 (RPLT…KPYF), 396–509 (TKST…SPTF), 510–616 (SNIS…PPRF), 617–717 (PQLM…GPVF), 719–819 (MFLP…SPVF), 820–926 (TNAS…SPVF), 927–1035 (SKTL…IPRF), 1037–1144 (QDEY…APVF), and 1145–1259 (TKKM…PPTL). Residues 1377-1397 (LLALAVIIILCCMPAILIVMV) traverse the membrane as a helical segment. The Cytoplasmic portion of the chain corresponds to 1398–1899 (SYRQRQAECA…KRFPSQSTAL (502 aa)). 3 disordered regions span residues 1668–1687 (SPCL…VVEP), 1700–1721 (HDYP…SFRI), and 1734–1820 (TKGE…RREL). Pro residues-rich tracts occupy residues 1706-1717 (LSPPPTRKPTPP) and 1743-1773 (PDPP…PPTL). Over residues 1774–1791 (PLASVPSSSSLPSTQHLS) the composition is skewed to low complexity. Over residues 1804–1814 (AVPPPAAVPEP) the composition is skewed to pro residues.

In terms of tissue distribution, in the utricle, localizes to the distal region of the kinocilium and near the tips of the stereocilia.

Its subcellular location is the cell membrane. Calcium-dependent cell-adhesion protein. Required for inner ear neuroepithelial cell elaboration and cochlear function. Probably involved in the maintenance of normal retinal function. The polypeptide is Protocadherin-15 (Pcdh15) (Gallus gallus (Chicken)).